The chain runs to 231 residues: MAKKKAFISLLYLASIVFLPWWISLSFTFNKSLESWVNNWWNTRPSEILLNDIQEKSILKKFIELEELSLFDEMLKEYSERRLQKLHVGVYNETIQWIKMHNEGRIHTILHFSTNIISFVILSVFSILSNEELIFLNSCLQEFLYNLSDTIKAFSILLLTDLCIGFHSPHGWELMIGSIYKDFGFAHNDQIISGVVSTFPVILDTIFKYWIFRYLNRVSPSLVVIYHSMND.

Transmembrane regions (helical) follow at residues 7-27 (FISLLYLASIVFLPWWISLSF), 116-136 (IISFVILSVFSILSNEELIFL), 156-176 (ILLLTDLCIGFHSPHGWELMI), and 191-211 (IISGVVSTFPVILDTIFKYWI).

Belongs to the CemA family.

The protein resides in the plastid. Its subcellular location is the chloroplast inner membrane. It catalyses the reaction K(+)(in) + H(+)(out) = K(+)(out) + H(+)(in). In terms of biological role, contributes to K(+)/H(+) antiport activity by supporting proton efflux to control proton extrusion and homeostasis in chloroplasts in a light-dependent manner to modulate photosynthesis. Prevents excessive induction of non-photochemical quenching (NPQ) under continuous-light conditions. Indirectly promotes efficient inorganic carbon uptake into chloroplasts. The chain is Potassium/proton antiporter CemA from Morus indica (Mulberry).